A 324-amino-acid chain; its full sequence is Probable cell division protein WhiA (324 aa).

The segment at residues 275–308 (SLEELGALADPPLTKDAIAGRIRRLIAMADRRAD) is a DNA-binding region (H-T-H motif).

This sequence belongs to the WhiA family.

Functionally, involved in cell division and chromosome segregation. This is Probable cell division protein WhiA from Acidothermus cellulolyticus (strain ATCC 43068 / DSM 8971 / 11B).